The sequence spans 119 residues: Protein Wnt-4 (119 aa).

A lipid anchor (O-palmitoleoyl serine; by PORCN) is attached at serine 1. Disulfide bonds link cysteine 69–cysteine 100 and cysteine 85–cysteine 95. Asparagine 86 is a glycosylation site (N-linked (GlcNAc...) asparagine).

This sequence belongs to the Wnt family. Palmitoleoylation is required for efficient binding to frizzled receptors. Depalmitoleoylation leads to Wnt signaling pathway inhibition.

Its subcellular location is the secreted. It is found in the extracellular space. It localises to the extracellular matrix. Ligand for members of the frizzled family of seven transmembrane receptors. Plays an important role in embryonic development. The polypeptide is Protein Wnt-4 (WNT4) (Meleagris gallopavo (Wild turkey)).